The chain runs to 129 residues: MANLNQIQKEVSEILSDQKSMKSDIKAILELLGSQNPTKESLEAVAAKIVNDLTKLINDCPCNKEILEALGNQPKEQLIEQPKEKGKGLNLGKYSYPNYGVGNEELGSSGNPKALTWPFKAPAGWPNQF.

Coiled coils occupy residues 1–31 (MANL…ILEL) and 38–59 (TKES…LIND). The tract at residues 122 to 129 (PAGWPNQF) is capsid binding.

The protein belongs to the caulimovirus ORF III family. As to quaternary structure, homotetramer, through coiled-coil domain. Homotrimer when interacts with icosehadral capsid. Interacts with capsid protein, and with Movement protein.

Its subcellular location is the virion. It localises to the host cell junction. The protein resides in the host plasmodesma. Its function is as follows. Plays a role in virus cell-to-cell and plant-to-plant transmission. Interacts with virion icosahedral capsid and movement protein, thereby facilitating virion cell-to-cell transmission through plasmodesmata opened by viral movement protein. Also interacts with aphid transmission factor, attaching the virion to aphid stylet when the animal feeds on an virus infected plant. Aphid saliva may later detach the virion, inducing release of infectious particles when the animal feeds on a new plant. This chain is Virion-associated protein, found in Arabidopsis thaliana (Mouse-ear cress).